The primary structure comprises 151 residues: uncharacterized protein (151 aa).

It to B.subtilis pcf and to sigma factors.

This is an uncharacterized protein from Bacillus subtilis (strain 168).